The following is an 85-amino-acid chain: ATP synthase subunit c (85 aa).

Helical transmembrane passes span 10–30 and 53–73; these read IAVAIIVGLCAVGTAIGFAVL and FIIAGLLDAVPMIGIVIALLF.

It belongs to the ATPase C chain family. F-type ATPases have 2 components, F(1) - the catalytic core - and F(0) - the membrane proton channel. F(1) has five subunits: alpha(3), beta(3), gamma(1), delta(1), epsilon(1). F(0) has three main subunits: a(1), b(2) and c(10-14). The alpha and beta chains form an alternating ring which encloses part of the gamma chain. F(1) is attached to F(0) by a central stalk formed by the gamma and epsilon chains, while a peripheral stalk is formed by the delta and b chains.

It localises to the cell inner membrane. F(1)F(0) ATP synthase produces ATP from ADP in the presence of a proton or sodium gradient. F-type ATPases consist of two structural domains, F(1) containing the extramembraneous catalytic core and F(0) containing the membrane proton channel, linked together by a central stalk and a peripheral stalk. During catalysis, ATP synthesis in the catalytic domain of F(1) is coupled via a rotary mechanism of the central stalk subunits to proton translocation. Functionally, key component of the F(0) channel; it plays a direct role in translocation across the membrane. A homomeric c-ring of between 10-14 subunits forms the central stalk rotor element with the F(1) delta and epsilon subunits. In Vibrio cholerae serotype O1 (strain ATCC 39315 / El Tor Inaba N16961), this protein is ATP synthase subunit c.